The primary structure comprises 328 residues: Tetraacyldisaccharide 4'-kinase (328 aa).

Thr-55–Thr-62 is a binding site for ATP.

It belongs to the LpxK family.

The catalysed reaction is a lipid A disaccharide + ATP = a lipid IVA + ADP + H(+). The protein operates within glycolipid biosynthesis; lipid IV(A) biosynthesis; lipid IV(A) from (3R)-3-hydroxytetradecanoyl-[acyl-carrier-protein] and UDP-N-acetyl-alpha-D-glucosamine: step 6/6. Functionally, transfers the gamma-phosphate of ATP to the 4'-position of a tetraacyldisaccharide 1-phosphate intermediate (termed DS-1-P) to form tetraacyldisaccharide 1,4'-bis-phosphate (lipid IVA). The polypeptide is Tetraacyldisaccharide 4'-kinase (Shigella boydii serotype 18 (strain CDC 3083-94 / BS512)).